We begin with the raw amino-acid sequence, 45 residues long: Metallothionein-like protein 1C (45 aa).

This sequence belongs to the metallothionein superfamily. Type 15 family. In terms of tissue distribution, widely expressed at low levels.

Metallothioneins have a high content of cysteine residues that bind various heavy metals. Confers tolerance to cadmium (Cd) and plays a role in Cd and zinc (Zn) homeostasis. The protein is Metallothionein-like protein 1C (MT1C) of Arabidopsis thaliana (Mouse-ear cress).